Reading from the N-terminus, the 229-residue chain is MKNNFFEAVKGKLIISCQALPNEPLHSSFIMARMARAAKMAGAAGIRANSVVDIQAIQDEAGLPMIGIAKTDYPDSDVFITPTLKEMRAVAATGVEVVACQVTGQRRPHDEKLAEIVQQFRTEFPNTLLMADTDTIENALEADRLGFDMIGTTMRGYTPATQGMNIADHDFEYLKELRSQVTRPIIAEGKIDTPEKLKCCLELGCHAVVVGGAITRPLEIATRFIEAIK.

The protein belongs to the NanE family.

The catalysed reaction is an N-acyl-D-glucosamine 6-phosphate = an N-acyl-D-mannosamine 6-phosphate. The protein operates within amino-sugar metabolism; N-acetylneuraminate degradation; D-fructose 6-phosphate from N-acetylneuraminate: step 3/5. Converts N-acetylmannosamine-6-phosphate (ManNAc-6-P) to N-acetylglucosamine-6-phosphate (GlcNAc-6-P). This chain is Putative N-acetylmannosamine-6-phosphate 2-epimerase, found in Pediococcus pentosaceus (strain ATCC 25745 / CCUG 21536 / LMG 10740 / 183-1w).